Reading from the N-terminus, the 299-residue chain is Tyrosine recombinase XerC (299 aa).

A Core-binding (CB) domain is found at 1–85 (MERQLEAYCA…AVRGLYRYLN (85 aa)). The Tyr recombinase domain occupies 106–285 (RLPKVLDTDR…DFQHLAAVYD (180 aa)). Catalysis depends on residues Arg146, Lys170, His237, Arg240, and His263. The active-site O-(3'-phospho-DNA)-tyrosine intermediate is Tyr272.

This sequence belongs to the 'phage' integrase family. XerC subfamily. As to quaternary structure, forms a cyclic heterotetrameric complex composed of two molecules of XerC and two molecules of XerD.

It is found in the cytoplasm. Site-specific tyrosine recombinase, which acts by catalyzing the cutting and rejoining of the recombining DNA molecules. The XerC-XerD complex is essential to convert dimers of the bacterial chromosome into monomers to permit their segregation at cell division. It also contributes to the segregational stability of plasmids. This Pseudomonas putida (strain W619) protein is Tyrosine recombinase XerC.